Consider the following 426-residue polypeptide: 3-phosphoshikimate 1-carboxyvinyltransferase (426 aa).

Lys-22, Ser-23, and Arg-27 together coordinate 3-phosphoshikimate. A phosphoenolpyruvate-binding site is contributed by Lys-22. Phosphoenolpyruvate contacts are provided by Gly-96 and Arg-124. Positions 170, 171, 172, 198, 314, 337, and 341 each coordinate 3-phosphoshikimate. Gln-172 lines the phosphoenolpyruvate pocket. The active-site Proton acceptor is Asp-314. The phosphoenolpyruvate site is built by Arg-345, Arg-387, and Lys-412.

The protein belongs to the EPSP synthase family. As to quaternary structure, monomer.

It is found in the cytoplasm. It carries out the reaction 3-phosphoshikimate + phosphoenolpyruvate = 5-O-(1-carboxyvinyl)-3-phosphoshikimate + phosphate. Its pathway is metabolic intermediate biosynthesis; chorismate biosynthesis; chorismate from D-erythrose 4-phosphate and phosphoenolpyruvate: step 6/7. Functionally, catalyzes the transfer of the enolpyruvyl moiety of phosphoenolpyruvate (PEP) to the 5-hydroxyl of shikimate-3-phosphate (S3P) to produce enolpyruvyl shikimate-3-phosphate and inorganic phosphate. The chain is 3-phosphoshikimate 1-carboxyvinyltransferase from Shewanella pealeana (strain ATCC 700345 / ANG-SQ1).